The following is a 217-amino-acid chain: Large ribosomal subunit protein uL3 (217 aa).

This sequence belongs to the universal ribosomal protein uL3 family. In terms of assembly, part of the 50S ribosomal subunit. Forms a cluster with proteins L14 and L19.

In terms of biological role, one of the primary rRNA binding proteins, it binds directly near the 3'-end of the 23S rRNA, where it nucleates assembly of the 50S subunit. The polypeptide is Large ribosomal subunit protein uL3 (Mycobacterium sp. (strain KMS)).